The primary structure comprises 708 residues: O-antigen chain terminator bifunctional methyltransferase/kinase WbdD (708 aa).

Positions 1–210 (MTKDLNTLVS…VPRPMYLVSN (210 aa)) are methyltransferase. S-adenosyl-L-methionine is bound by residues 16–17 (YQ), R36, G61, 82–87 (DFQQEN), 108–111 (GRIE), and L128. Residues 211–459 (HRVLINDFNQ…AKLPSAEQQR (249 aa)) are kinase. Residues P229, H237, 241 to 243 (RRY), K252, E274, 309 to 311 (EKL), M358, and D369 each bind ATP. Residues 485–594 (AGSEALRGQI…EIEKIHRSRS (110 aa)) adopt a coiled-coil conformation. The required for membrane-binding stretch occupies residues 601 to 669 (YRYLGLQIHL…RLYRRMNPLP (69 aa)). Residues 687 to 708 (VMHPELLPPEVYEIYLKLTKNK) are required for localizing WbdA to the membrane.

This sequence belongs to the WbdD family. Homotrimer in solution. Interacts with WbdA.

It is found in the cell inner membrane. It carries out the reaction 3-O-phospho-alpha-D-Man-(1-&gt;2)-alpha-D-Man-(1-&gt;2)-[alpha-D-Man-(1-&gt;3)-alpha-D-Man-(1-&gt;3)-alpha-D-Man-(1-&gt;2)-alpha-D-Man-(1-&gt;2)](n)-alpha-D-Man-(1-&gt;3)-alpha-D-Man-(1-&gt;3)-alpha-D-Man-(1-&gt;3)-alpha-D-GlcNAc-di-trans,octa-cis-undecaprenyl diphosphate + S-adenosyl-L-methionine = 3-O-methylphospho-alpha-D-Man-(1-&gt;2)-alpha-D-Man-(1-&gt;2)-[alpha-D-Man-(1-&gt;3)-alpha-D-Man-(1-&gt;3)-alpha-D-Man-(1-&gt;2)-alpha-D-Man-(1-&gt;2)](n)-alpha-D-Man-(1-&gt;3)-alpha-D-Man-(1-&gt;3)-alpha-D-Man-(1-&gt;3)-alpha-D-GlcNAc-di-trans,octa-cis-undecaprenyl diphosphate + S-adenosyl-L-homocysteine. The catalysed reaction is alpha-D-Man-(1-&gt;2)-alpha-D-Man-(1-&gt;2)-[alpha-D-Man-(1-&gt;3)-alpha-D-Man-(1-&gt;3)-alpha-D-Man-(1-&gt;2)-alpha-D-Man-(1-&gt;2)](n)-alpha-D-Man-(1-&gt;3)-alpha-D-Man-(1-&gt;3)-alpha-D-Man-(1-&gt;3)-alpha-D-GlcNAc-di-trans,octa-cis-undecaprenyl diphosphate + ATP = 3-O-phospho-alpha-D-Man-(1-&gt;2)-alpha-D-Man-(1-&gt;2)-[alpha-D-Man-(1-&gt;3)-alpha-D-Man-(1-&gt;3)-alpha-D-Man-(1-&gt;2)-alpha-D-Man-(1-&gt;2)](n)-alpha-D-Man-(1-&gt;3)-alpha-D-Man-(1-&gt;3)-alpha-D-Man-(1-&gt;3)-alpha-D-GlcNAc-di-trans,octa-cis-undecaprenyl diphosphate + ADP + H(+). It participates in bacterial outer membrane biogenesis; LPS O-antigen biosynthesis. In terms of biological role, regulates the length of the LPS O-antigen polysaccharide chain. Stops the polymerization of the chain by phosphorylating and then methylating the phosphate on the terminal sugar. This terminal modification is essential for export of the O-antigen across the inner membrane. WbdD is also required for correct localization of the WbdA mannosyltransferase. This chain is O-antigen chain terminator bifunctional methyltransferase/kinase WbdD, found in Escherichia coli.